A 650-amino-acid chain; its full sequence is Fructose-1,6-bisphosphatase class 3 (650 aa).

Belongs to the FBPase class 3 family. Requires Mn(2+) as cofactor.

The enzyme catalyses beta-D-fructose 1,6-bisphosphate + H2O = beta-D-fructose 6-phosphate + phosphate. It participates in carbohydrate biosynthesis; gluconeogenesis. This Finegoldia magna (strain ATCC 29328 / DSM 20472 / WAL 2508) (Peptostreptococcus magnus) protein is Fructose-1,6-bisphosphatase class 3.